Reading from the N-terminus, the 686-residue chain is Epsin (686 aa).

One can recognise an ENTH domain in the interval 14–145 (DAVLNTPEIE…QDDQRIKEER (132 aa)). Disordered stretches follow at residues 177 to 417 (YDSD…FNNN) and 463 to 571 (NSSM…TMRP). Residues 185-211 (NQRDSYGGNQRDSYGGNQRDSYGGNQR) show a composition bias toward polar residues. The span at 212–225 (ETTRRDSFNGRDEG) shows a compositional bias: basic and acidic residues. Polar residues predominate over residues 237–256 (SYDSDPYSNTRAEYENYSNR). 2 stretches are compositionally biased toward low complexity: residues 269–340 (SNNS…SGPS) and 383–417 (NNTN…FNNN). Polar residues predominate over residues 491–503 (FDQQSGDFSNKND). The span at 504 to 521 (GQQKPKDTNDPWSKKDLF) shows a compositional bias: basic and acidic residues. Positions 527–547 (GNQNPNQSPVNNTNNNNNGNT) are enriched in low complexity. Positions 558-567 (PITSAGSTIP) are enriched in polar residues.

Belongs to the epsin family.

It is found in the membrane. It localises to the clathrin-coated pit. Functionally, binds to membranes enriched in phosphatidylinositol 4,5-bisphosphate (PtdIns(4,5)P2). In Dictyostelium discoideum (Social amoeba), this protein is Epsin (epnA).